The chain runs to 240 residues: HTH-type transcriptional regulator Mce2R (240 aa).

Positions 9 to 77 (RSVPEEVFEQ…QGDVTTVRDF (69 aa)) constitute an HTH gntR-type domain. The segment at residues 37–56 (ERRLAELLGVSRPAVREALK) is a DNA-binding region (H-T-H motif).

Its function is as follows. Negatively regulates the expression of its operon as well as expression of end (endonuclease 4). This chain is HTH-type transcriptional regulator Mce2R (mce2R), found in Mycobacterium tuberculosis (strain CDC 1551 / Oshkosh).